Here is a 697-residue protein sequence, read N- to C-terminus: Pentatricopeptide repeat-containing protein 1, mitochondrial (697 aa).

A mitochondrion-targeting transit peptide spans 1–36; the sequence is MLKRAHYVALHVTLNHNGLSYQRVFSCLTQFPMLRH. PPR repeat units lie at residues 257–288 and 294–328; these read RPFT…VKNK and SDVF…NVNF.

Its subcellular location is the mitochondrion. Its function is as follows. Mitochondrial RNA-binding protein required for the stability of the cox2 and cox3 mRNAs. In Schizosaccharomyces pombe (strain 972 / ATCC 24843) (Fission yeast), this protein is Pentatricopeptide repeat-containing protein 1, mitochondrial (ppr1).